A 430-amino-acid chain; its full sequence is Adenylosuccinate synthetase (430 aa).

Residues 12-18 (GDEGKGK) and 40-42 (GHT) each bind GTP. Catalysis depends on Asp13, which acts as the Proton acceptor. Asp13 and Gly40 together coordinate Mg(2+). IMP is bound by residues 13–16 (DEGK), 38–41 (NAGH), Thr128, Arg142, Gln223, Thr238, and Arg302. The active-site Proton donor is His41. Position 298–304 (298–304 (TTTGRPR)) interacts with substrate. Residues Arg304, 330–332 (SID), and 412–414 (SVG) each bind GTP.

Belongs to the adenylosuccinate synthetase family. As to quaternary structure, homodimer. Mg(2+) serves as cofactor.

The protein resides in the cytoplasm. The enzyme catalyses IMP + L-aspartate + GTP = N(6)-(1,2-dicarboxyethyl)-AMP + GDP + phosphate + 2 H(+). It functions in the pathway purine metabolism; AMP biosynthesis via de novo pathway; AMP from IMP: step 1/2. In terms of biological role, plays an important role in the de novo pathway of purine nucleotide biosynthesis. Catalyzes the first committed step in the biosynthesis of AMP from IMP. The chain is Adenylosuccinate synthetase from Streptococcus agalactiae serotype Ia (strain ATCC 27591 / A909 / CDC SS700).